The sequence spans 2280 residues: Protein Ycf2 (2280 aa).

1631–1638 provides a ligand contact to ATP; sequence GSIGTGRS.

It belongs to the Ycf2 family.

It localises to the plastid. It is found in the chloroplast stroma. Functionally, probable ATPase of unknown function. Its presence in a non-photosynthetic plant (Epifagus virginiana) and experiments in tobacco indicate that it has an essential function which is probably not related to photosynthesis. In Nicotiana tomentosiformis (Tobacco), this protein is Protein Ycf2.